The primary structure comprises 512 residues: Putative B3 domain-containing protein REM4 (512 aa).

The TF-B3 1 DNA-binding region spans 11 to 103 (NKAFFIIDLS…VFHVSPFGRS (93 aa)). The tract at residues 111–145 (SSSTSDDDDDERTVFDDDEDDDVGDDDDNSISEDD) is disordered. Residues 115–145 (SDDDDDERTVFDDDEDDDVGDDDDNSISEDD) are compositionally biased toward acidic residues. 2 consecutive DNA-binding regions (TF-B3) follow at residues 169–265 (YLVA…LCPN) and 307–403 (ILTF…CSKV). Residues 408–465 (SSDGHKTADRKPRMTDQAPLAEEQTDNRVEKRAQVTEEGGPSRSTRADPGNLQQKQPC) form a disordered region. Composition is skewed to basic and acidic residues over residues 410 to 421 (DGHKTADRKPRM) and 432 to 442 (TDNRVEKRAQV).

The protein resides in the nucleus. This Arabidopsis thaliana (Mouse-ear cress) protein is Putative B3 domain-containing protein REM4 (REM4).